Here is a 115-residue protein sequence, read N- to C-terminus: Large ribosomal subunit protein bL20 (115 aa).

The protein belongs to the bacterial ribosomal protein bL20 family.

Functionally, binds directly to 23S ribosomal RNA and is necessary for the in vitro assembly process of the 50S ribosomal subunit. It is not involved in the protein synthesizing functions of that subunit. The protein is Large ribosomal subunit protein bL20 of Prochlorococcus marinus (strain MIT 9303).